A 25-amino-acid polypeptide reads, in one-letter code: Chlorocatechol 1,2-dioxygenase 1 (25 aa).

This sequence belongs to the intradiol ring-cleavage dioxygenase family. Fe(3+) is required as a cofactor.

It carries out the reaction 3,5-dichlorocatechol + O2 = (2E,4E)-2,4-dichloromuconate + 2 H(+). The protein operates within xenobiotic degradation; 2-(2,4-dichlorophenoxy)propanoate degradation. This is Chlorocatechol 1,2-dioxygenase 1 (tfdC) from Delftia acidovorans (Pseudomonas acidovorans).